Here is a 506-residue protein sequence, read N- to C-terminus: Probable alpha-L-arabinofuranosidase B (506 aa).

Residues 1–26 (MLSQPSRERAFVLALGLVVSSSLAAA) form the signal peptide. Residues 27–343 (APCDIYSSGG…ADIVAANYAV (317 aa)) are catalytic. 3 disulfide bridges follow: C29/C39, C89/C94, and C184/C185. D227 contributes to the substrate binding site. The active-site Nucleophile is the E229. N230 contributes to the substrate binding site. N-linked (GlcNAc...) asparagine glycosylation occurs at N285. A substrate-binding site is contributed by G304. D305 serves as the catalytic Proton donor. Positions 344–506 (TSLTSGPALT…VSWVISSGFA (163 aa)) are ABD. An intrachain disulfide couples C409 to C447. Substrate is bound by residues H424, N426, F427, D443, H471, L476, and D496.

This sequence belongs to the glycosyl hydrolase 54 family.

Its subcellular location is the secreted. It catalyses the reaction Hydrolysis of terminal non-reducing alpha-L-arabinofuranoside residues in alpha-L-arabinosides.. The protein operates within glycan metabolism; L-arabinan degradation. Functionally, alpha-L-arabinofuranosidase involved in the degradation of arabinoxylan, a major component of plant hemicellulose. Able to hydrolyze 1,5-, 1,3- and 1,2-alpha-linkages not only in L-arabinofuranosyl oligosaccharides, but also in polysaccharides containing terminal non-reducing L-arabinofuranoses in side chains, like L-arabinan, arabinogalactan and arabinoxylan. The polypeptide is Probable alpha-L-arabinofuranosidase B (abfB) (Aspergillus clavatus (strain ATCC 1007 / CBS 513.65 / DSM 816 / NCTC 3887 / NRRL 1 / QM 1276 / 107)).